The sequence spans 190 residues: Vascular endothelial growth factor A (190 aa).

The signal sequence occupies residues 1-26 (MNFLLSWVHWTLALLLYLHHAKWSQA). Disulfide bonds link C51-C93, C82-C127, and C86-C129. N100 carries an N-linked (GlcNAc...) asparagine glycan.

Belongs to the PDGF/VEGF growth factor family. In terms of assembly, homodimer; disulfide-linked. Also found as heterodimer with PGF. Interacts with NRP1. Interacts with isoform 2 of BSG. Interacts with CD82; this interaction inhibits VEGFA-mediated signaling pathway.

Its subcellular location is the secreted. Functionally, growth factor active in angiogenesis, vasculogenesis and endothelial cell growth. Induces endothelial cell proliferation, promotes cell migration, inhibits apoptosis and induces permeabilization of blood vessels. Binds to the FLT1/VEGFR1 and KDR/VEGFR2 receptors, heparan sulfate and heparin. Binding to NRP1 receptor initiates a signaling pathway needed for motor neuron axon guidance and cell body migration, including for the caudal migration of facial motor neurons from rhombomere 4 to rhombomere 6 during embryonic development. Also binds the DEAR/FBXW7-AS1 receptor. This chain is Vascular endothelial growth factor A (VEGFA), found in Mesocricetus auratus (Golden hamster).